We begin with the raw amino-acid sequence, 282 residues long: Phosphate transport system permease protein PstA (282 aa).

Helical transmembrane passes span 22 to 42 (LSYISVIIGLFWLCWILFTLI), 71 to 91 (LIGSFFIVGAGTLIGTPIGVL), 111 to 131 (FLNDILLSAPSIIIGLFVYSL), 136 to 156 (IEHFSGWAGAFALALLLIPIV), 198 to 218 (ILTGVLLAVARISGETAPLLF), and 254 to 274 (NLAWAGAALITLFVLCLNIFT). One can recognise an ABC transmembrane type-1 domain in the interval 71 to 274 (LIGSFFIVGA…LFVLCLNIFT (204 aa)).

Belongs to the binding-protein-dependent transport system permease family. CysTW subfamily.

The protein localises to the cell inner membrane. Part of the binding-protein-dependent transport system for phosphate; probably responsible for the translocation of the substrate across the membrane. The sequence is that of Phosphate transport system permease protein PstA (pstA) from Haemophilus influenzae (strain ATCC 51907 / DSM 11121 / KW20 / Rd).